The following is a 311-amino-acid chain: Homoserine O-acetyltransferase (311 aa).

Catalysis depends on cysteine 142, which acts as the Acyl-thioester intermediate. The substrate site is built by lysine 163 and serine 192. Histidine 235 acts as the Proton acceptor in catalysis. Glutamate 237 is an active-site residue. Residue arginine 249 participates in substrate binding.

This sequence belongs to the MetA family.

The protein resides in the cytoplasm. The catalysed reaction is L-homoserine + acetyl-CoA = O-acetyl-L-homoserine + CoA. The protein operates within amino-acid biosynthesis; L-methionine biosynthesis via de novo pathway; O-acetyl-L-homoserine from L-homoserine: step 1/1. Functionally, transfers an acetyl group from acetyl-CoA to L-homoserine, forming acetyl-L-homoserine. The chain is Homoserine O-acetyltransferase from Lysinibacillus sphaericus (strain C3-41).